The sequence spans 207 residues: Glutathione S-transferase 4 (207 aa).

Positions 2–79 (PNYKLLYFDA…YLARKFGLAG (78 aa)) constitute a GST N-terminal domain. Residues tyrosine 8, tryptophan 39, lysine 43, 49 to 51 (GQL), and 63 to 64 (QS) each bind glutathione. A GST C-terminal domain is found at 81 to 207 (TAEEEAYADS…YVATRKDSIV (127 aa)).

This sequence belongs to the GST superfamily. Sigma family.

The catalysed reaction is RX + glutathione = an S-substituted glutathione + a halide anion + H(+). Its function is as follows. Conjugation of reduced glutathione to a wide number of exogenous and endogenous hydrophobic electrophiles. May play a role in the detoxification of reactive oxygen species produced during pathogenic bacterial infection. This Caenorhabditis elegans protein is Glutathione S-transferase 4.